Consider the following 421-residue polypeptide: Elsinochrome C biosynthesis regulatory protein elcR (421 aa).

The span at 1-16 (MATQLPSPTATTSHSG) shows a compositional bias: polar residues. A disordered region spans residues 1–20 (MATQLPSPTATTSHSGNEPR). Positions 27–54 (CNNCSAQKIRCGKQRPACARCVNKKLQC) form a DNA-binding region, zn(2)-C6 fungal-type.

It localises to the nucleus. Transcription regulator of the gene cluster that mediates the biosynthesis of elsinochrome C, a perelyenequinone phytotoxin structurally similar to cercosporin. The polypeptide is Elsinochrome C biosynthesis regulatory protein elcR (Phaeosphaeria nodorum (strain SN15 / ATCC MYA-4574 / FGSC 10173) (Glume blotch fungus)).